Reading from the N-terminus, the 134-residue chain is Small ribosomal subunit protein uS8c (134 aa).

This sequence belongs to the universal ribosomal protein uS8 family. As to quaternary structure, part of the 30S ribosomal subunit.

It is found in the plastid. Its subcellular location is the chloroplast. Its function is as follows. One of the primary rRNA binding proteins, it binds directly to 16S rRNA central domain where it helps coordinate assembly of the platform of the 30S subunit. This is Small ribosomal subunit protein uS8c (rps8) from Gossypium barbadense (Sea Island cotton).